Reading from the N-terminus, the 312-residue chain is Olfactory receptor 51I2 (312 aa).

Topologically, residues 1-25 (MGLFNVTHPAFFLLTGIPGLESSHS) are extracellular. N5 carries an N-linked (GlcNAc...) asparagine glycan. A helical membrane pass occupies residues 26 to 46 (WLSGPLCVMYAVALGGNTVIL). The Cytoplasmic portion of the chain corresponds to 47-54 (QAVRVEPS). A helical membrane pass occupies residues 55–75 (LHEPMYYFLSMLSFSDVAISM). Topologically, residues 76 to 99 (ATLPTVLRTFCLNARNITFDACLI) are extracellular. A disulfide bond links C97 and C189. A helical transmembrane segment spans residues 100–120 (QMFLIHFFSMMESGILLAMSF). The Cytoplasmic portion of the chain corresponds to 121-139 (DRYVAICDPLRYATVLTTE). A helical transmembrane segment spans residues 140–160 (VIAAMGLGAAARSFITLFPLP). At 161–196 (FLIKRLPICRSNVLSHSYCLHPDMMRLACADISINS) the chain is on the extracellular side. Residues 197–217 (IYGLFVLVSTFGMDLFFIFLS) traverse the membrane as a helical segment. Over 218–237 (YVLILRSVMATASREERLKA) the chain is Cytoplasmic. The chain crosses the membrane as a helical span at residues 238–258 (LNTCVSHILAVLAFYVPMIGV). Residues 259 to 273 (STVHRFGKHVPCYIH) lie on the Extracellular side of the membrane. Residues 274–294 (VLMSNVYLFVPPVLNPLIYSA) traverse the membrane as a helical segment. The Cytoplasmic segment spans residues 295–312 (KTKEIRRAIFRMFHHIKI).

The protein belongs to the G-protein coupled receptor 1 family.

The protein localises to the cell membrane. Functionally, odorant receptor. The sequence is that of Olfactory receptor 51I2 (OR51I2) from Homo sapiens (Human).